The sequence spans 113 residues: uncharacterized protein (113 aa).

The next 2 helical transmembrane spans lie at 25 to 45 (FGFCYFLFLISFIMCIVCFII) and 49 to 69 (FEVEIILVILFPFLLLILSVW).

Its subcellular location is the host membrane. This is an uncharacterized protein from Spiroplasma citri (SpV1).